A 197-amino-acid chain; its full sequence is Holliday junction branch migration complex subunit RuvA (197 aa).

The segment at 1–61 (MYEYFEGTIT…ENGMTLYGFK (61 aa)) is domain I. Residues 62 to 140 (SQQDKVLFNK…NYVAENLFTE (79 aa)) form a domain II region. Residues 141–150 (DEPVESVFPA) form a flexible linker region. The domain III stretch occupies residues 150–197 (ALEDALLALGALGYSQKEVDRIKPKLKKLPEMSADEYIKQGLGFLLKK).

Belongs to the RuvA family. In terms of assembly, homotetramer. Forms an RuvA(8)-RuvB(12)-Holliday junction (HJ) complex. HJ DNA is sandwiched between 2 RuvA tetramers; dsDNA enters through RuvA and exits via RuvB. An RuvB hexamer assembles on each DNA strand where it exits the tetramer. Each RuvB hexamer is contacted by two RuvA subunits (via domain III) on 2 adjacent RuvB subunits; this complex drives branch migration. In the full resolvosome a probable DNA-RuvA(4)-RuvB(12)-RuvC(2) complex forms which resolves the HJ.

The protein localises to the cytoplasm. Functionally, the RuvA-RuvB-RuvC complex processes Holliday junction (HJ) DNA during genetic recombination and DNA repair, while the RuvA-RuvB complex plays an important role in the rescue of blocked DNA replication forks via replication fork reversal (RFR). RuvA specifically binds to HJ cruciform DNA, conferring on it an open structure. The RuvB hexamer acts as an ATP-dependent pump, pulling dsDNA into and through the RuvAB complex. HJ branch migration allows RuvC to scan DNA until it finds its consensus sequence, where it cleaves and resolves the cruciform DNA. In Lactobacillus delbrueckii subsp. bulgaricus (strain ATCC BAA-365 / Lb-18), this protein is Holliday junction branch migration complex subunit RuvA.